Consider the following 309-residue polypeptide: Porphobilinogen deaminase (309 aa).

At Cys-242 the chain carries S-(dipyrrolylmethanemethyl)cysteine.

The protein belongs to the HMBS family. Monomer. Requires dipyrromethane as cofactor.

The enzyme catalyses 4 porphobilinogen + H2O = hydroxymethylbilane + 4 NH4(+). Its pathway is porphyrin-containing compound metabolism; protoporphyrin-IX biosynthesis; coproporphyrinogen-III from 5-aminolevulinate: step 2/4. Functionally, tetrapolymerization of the monopyrrole PBG into the hydroxymethylbilane pre-uroporphyrinogen in several discrete steps. In Shewanella woodyi (strain ATCC 51908 / MS32), this protein is Porphobilinogen deaminase.